A 1154-amino-acid chain; its full sequence is FERM domain-containing protein A (1154 aa).

5 disordered regions span residues 122–149 (NNNS…SSSS), 432–468 (NLSS…NHHN), 715–734 (NKNN…SSSS), 771–794 (SNSN…TSSS), and 961–980 (TNGS…NNGI). 2 FERM domains span residues 218-547 (PLHQ…PSIQ) and 666-1103 (REIV…QTKL). Residues 437–447 (GGSGNGSGSGN) are compositionally biased toward gly residues. The segment covering 448–463 (GSSSSSSNSSSGNNNN) has biased composition (low complexity).

Key regulator of adhesion dynamics, it acts as an anti-adhesive. Plays a critical role in the regulation of cell-cell adhesion, multi-cellular development and, in particular, the formation of the organising center known as the tip. Required for turnover of paxillin-adhesion sites during cell migration. Plays a major role in normal cell shape, cell-substrate adhesion and actin cytoskeleton organization. This chain is FERM domain-containing protein A (frmA), found in Dictyostelium discoideum (Social amoeba).